A 237-amino-acid chain; its full sequence is Uridylate kinase (237 aa).

11 to 14 (KLSG) lines the ATP pocket. Positions 18 to 23 (GGGGIG) are involved in allosteric activation by GTP. Glycine 52 is a UMP binding site. ATP is bound by residues glycine 53 and arginine 57. UMP is bound by residues aspartate 72 and 133–140 (SGMPYFST). 3 residues coordinate ATP: glutamine 161, tyrosine 167, and aspartate 170.

It belongs to the UMP kinase family. As to quaternary structure, homohexamer.

It is found in the cytoplasm. It carries out the reaction UMP + ATP = UDP + ADP. It functions in the pathway pyrimidine metabolism; CTP biosynthesis via de novo pathway; UDP from UMP (UMPK route): step 1/1. Allosterically activated by GTP. Inhibited by UTP. Catalyzes the reversible phosphorylation of UMP to UDP. This chain is Uridylate kinase, found in Cutibacterium acnes (strain DSM 16379 / KPA171202) (Propionibacterium acnes).